The sequence spans 516 residues: Putative thymidine phosphorylase (516 aa).

The protein belongs to the thymidine/pyrimidine-nucleoside phosphorylase family. Type 2 subfamily.

The catalysed reaction is thymidine + phosphate = 2-deoxy-alpha-D-ribose 1-phosphate + thymine. The chain is Putative thymidine phosphorylase from Methylococcus capsulatus (strain ATCC 33009 / NCIMB 11132 / Bath).